We begin with the raw amino-acid sequence, 425 residues long: Threonine synthase (425 aa).

Lys105 is modified (N6-(pyridoxal phosphate)lysine).

It belongs to the threonine synthase family. It depends on pyridoxal 5'-phosphate as a cofactor.

The catalysed reaction is O-phospho-L-homoserine + H2O = L-threonine + phosphate. It functions in the pathway amino-acid biosynthesis; L-threonine biosynthesis; L-threonine from L-aspartate: step 5/5. Catalyzes the gamma-elimination of phosphate from L-phosphohomoserine and the beta-addition of water to produce L-threonine. The protein is Threonine synthase (thrC) of Haemophilus influenzae (strain ATCC 51907 / DSM 11121 / KW20 / Rd).